The sequence spans 160 residues: Surface-adhesin protein E (160 aa).

Positions Met1–Ala15 are cleaved as a signal peptide. Cys16 carries N-palmitoyl cysteine lipidation. Cys16 carries the S-diacylglycerol cysteine lipid modification. The segment at Ile41–Phe68 is interaction with laminin and plasminogen. Residues Pro84–Arg108 are interaction with vitronectin and epithelial cells.

As to quaternary structure, homodimer. Interacts with host vitronectin, laminin and plasminogen. Can interact with both immobilized and soluble vitronectin.

It localises to the cell outer membrane. The protein resides in the cell surface. Its function is as follows. Acts as a multifunctional adhesin involved in direct interactions with host epithelial cells and host proteins, including vitronectin, laminin and plasminogen. In addition, interaction with serum vitronectin plays an important role in bacterial serum resistance, and conversion of plasminogen to plasmin at the cell surface aids in immune evasion and contributes to bacterial virulence. Induces a pro-inflammatory epithelial cell response, leading to interleukin-8 (IL-8) secretion and up-regulation of ICAM1. In Haemophilus influenzae (strain NTHi 3655), this protein is Surface-adhesin protein E (pe).